Reading from the N-terminus, the 448-residue chain is Glucan 1,3-beta-glucosidase I/II (448 aa).

An N-terminal signal peptide occupies residues 1 to 19; the sequence is MLSLKTLLCTLLTVSSVLA. The propeptide occupies 20-40; it reads TPVPARDPSSIQFVHEENKKR. A glycan (N-linked (GlcNAc...) asparagine) is linked at N165. The Proton donor role is filled by E232. N325 carries N-linked (GlcNAc...) asparagine glycosylation. Residue E334 is the Nucleophile of the active site.

Belongs to the glycosyl hydrolase 5 (cellulase A) family.

It is found in the secreted. The protein localises to the cell wall. It carries out the reaction Successive hydrolysis of beta-D-glucose units from the non-reducing ends of (1-&gt;3)-beta-D-glucans, releasing alpha-glucose.. Its function is as follows. Glucanases possibly play a role in cell expansion during growth, in cell-cell fusion during mating, and in spore release during sporulation. This enzyme hydrolyzes both 1,3-beta- and 1,6-beta-linkages and even has beta-glucosidase activity. It could also function biosynthetically as a transglycosylase. This Saccharomyces cerevisiae (strain ATCC 204508 / S288c) (Baker's yeast) protein is Glucan 1,3-beta-glucosidase I/II (EXG1).